Consider the following 697-residue polypeptide: MCKSLRYCFSHCLYLAMTRLEEVNREVNMHSSVRYLGYLARINLLVAICLGLYVRWEKTANSLILVIFILGLFVLGIASILYYYFSMEAASLSLSNLWFGFLLGLLCFLDNSSFKNDVKEESTKYLLLTSIVLRILCSLVERISGYVRHRPTLLTTVEFLELVGFAIASTTMLVEKSLSVILLVVALAMLIIDLRMKSFLAIPNLVIFAVLLFFSSLETPKNPIAFACFFICLITDPFLDIYFSGLSVTERWKPFLYRGRICRRLSVVFAGMIELTFFILSAFKLRDTHLWYFVIPGFSIFGIFWMICHIIFLLTLWGFHTKLNDCHKVYFTHRTDYNSLDRIMASKGMRHFCLISEQLVFFSLLATAILGAVSWQPTNGIFLSMFLIVLPLESMAHGLFHELGNCLGGTSVGYAIVIPTNFCSPDGQPTLLPPEHVQELNLRSTGMLNAIQRFFAYHMIETYGCDYSTSGLSFDTLHSKLKAFLELRTVDGPRHDTYILYYSGHTHGTGEWALAGGDTLRLDTLIEWWREKNGSFCSRLIIVLDSENSTPWVKEVRKINDQYIAVQGAELIKTVDIEEADPPQLGDFTKDWVEYNCNSSNNICWTEKGRTVKAVYGVSKRWSDYTLHLPTGSDVAKHWMLHFPRITYPLVHLANWLCGLNLFWICKTCFRCLKRLKMSWFLPTVLDTGQGFKLVKS.

3 consecutive transmembrane segments (helical) span residues Leu36–Trp56, Leu63–Tyr83, and Ala89–Leu109. N-linked (GlcNAc...) asparagine glycosylation occurs at Asn111. 7 helical membrane-spanning segments follow: residues Met172–Ile192, Phe199–Thr219, Pro223–Phe243, Leu265–Leu285, Phe293–Leu313, Phe352–Ala372, and Gly380–Phe400. N-linked (GlcNAc...) asparagine glycans are attached at residues Asn533 and Asn598. The helical transmembrane segment at Ile646 to Cys666 threads the bilayer.

This sequence belongs to the TMEM168 family.

It localises to the nucleus membrane. Functionally, plays a key role in maintaining the cardiac electrical stability by modulating cell surface expression of SCN5A. May play a role in the modulation of anxiety behavior by regulating GABAergic neuronal system in the nucleus accumbens. The sequence is that of Transmembrane protein 168 from Homo sapiens (Human).